A 130-amino-acid polypeptide reads, in one-letter code: MNFNDIETMVKSKFKDIKKHAEEIAHEIEVRSGYLRKAEQYKRLEFNLSIALDDVESTAKDVQTAKSSANKDSVSVKGKAPNTLYIEKRNLMKQKLEMLGEDIDKNKESLQKAKGIAGEKASEYFNKAMN.

The protein belongs to the EsxC family. As to quaternary structure, forms both homodimers and heterodimers with EsxA. Homodimerization is calcium-dependent.

It localises to the secreted. Implements its pathogenic function during infection. This Staphylococcus aureus (strain Mu50 / ATCC 700699) protein is Type VII secretion system extracellular protein C.